A 570-amino-acid polypeptide reads, in one-letter code: Proline--tRNA ligase (570 aa).

This sequence belongs to the class-II aminoacyl-tRNA synthetase family. ProS type 1 subfamily. As to quaternary structure, homodimer.

The protein localises to the cytoplasm. The enzyme catalyses tRNA(Pro) + L-proline + ATP = L-prolyl-tRNA(Pro) + AMP + diphosphate. In terms of biological role, catalyzes the attachment of proline to tRNA(Pro) in a two-step reaction: proline is first activated by ATP to form Pro-AMP and then transferred to the acceptor end of tRNA(Pro). As ProRS can inadvertently accommodate and process non-cognate amino acids such as alanine and cysteine, to avoid such errors it has two additional distinct editing activities against alanine. One activity is designated as 'pretransfer' editing and involves the tRNA(Pro)-independent hydrolysis of activated Ala-AMP. The other activity is designated 'posttransfer' editing and involves deacylation of mischarged Ala-tRNA(Pro). The misacylated Cys-tRNA(Pro) is not edited by ProRS. The protein is Proline--tRNA ligase of Geobacter metallireducens (strain ATCC 53774 / DSM 7210 / GS-15).